We begin with the raw amino-acid sequence, 356 residues long: Probable dual-specificity RNA methyltransferase RlmN (356 aa).

E97 functions as the Proton acceptor in the catalytic mechanism. One can recognise a Radical SAM core domain in the interval 103–333; it reads YHHGNSVCIS…VTIRREMGSD (231 aa). Residues C110 and C338 are joined by a disulfide bond. The [4Fe-4S] cluster site is built by C117, C121, and C124. S-adenosyl-L-methionine is bound by residues 164 to 165, S196, 219 to 221, and N295; these read GE and SLH. C338 (S-methylcysteine intermediate) is an active-site residue.

The protein belongs to the radical SAM superfamily. RlmN family. Requires [4Fe-4S] cluster as cofactor.

It is found in the cytoplasm. It catalyses the reaction adenosine(2503) in 23S rRNA + 2 reduced [2Fe-2S]-[ferredoxin] + 2 S-adenosyl-L-methionine = 2-methyladenosine(2503) in 23S rRNA + 5'-deoxyadenosine + L-methionine + 2 oxidized [2Fe-2S]-[ferredoxin] + S-adenosyl-L-homocysteine. The catalysed reaction is adenosine(37) in tRNA + 2 reduced [2Fe-2S]-[ferredoxin] + 2 S-adenosyl-L-methionine = 2-methyladenosine(37) in tRNA + 5'-deoxyadenosine + L-methionine + 2 oxidized [2Fe-2S]-[ferredoxin] + S-adenosyl-L-homocysteine. Its function is as follows. Specifically methylates position 2 of adenine 2503 in 23S rRNA and position 2 of adenine 37 in tRNAs. In Lachnoclostridium phytofermentans (strain ATCC 700394 / DSM 18823 / ISDg) (Clostridium phytofermentans), this protein is Probable dual-specificity RNA methyltransferase RlmN.